The primary structure comprises 71 residues: Putative defensin-like protein 303 (71 aa).

A signal peptide spans M1–S25. Cystine bridges form between C27-C45, C33-C50, and C39-C52.

The protein belongs to the DEFL family.

It localises to the secreted. The sequence is that of Putative defensin-like protein 303 from Arabidopsis thaliana (Mouse-ear cress).